We begin with the raw amino-acid sequence, 229 residues long: Protein FAM3C (229 aa).

Positions 1–24 (MRIAGAIKFVIAVALFLLTFYVIS) are cleaved as a signal peptide. Cystine bridges form between Cys-59–Cys-87 and Cys-65–Cys-222. Residues 68–226 (KHFAFKIASG…VEMEGCIPQK (159 aa)) form the GG-type lectin domain.

Belongs to the FAM3 family.

Its subcellular location is the secreted. In terms of biological role, involved in retinal laminar formation. The chain is Protein FAM3C (fam3c) from Xenopus tropicalis (Western clawed frog).